The primary structure comprises 99 residues: DNA-binding protein Fis (99 aa).

Positions 75–94 (QTRAANMLGINRGTLRKKLK) form a DNA-binding region, H-T-H motif.

Belongs to the transcriptional regulatory Fis family. In terms of assembly, homodimer.

Functionally, activates ribosomal RNA transcription. Plays a direct role in upstream activation of rRNA promoters. This chain is DNA-binding protein Fis, found in Haemophilus influenzae (strain 86-028NP).